The primary structure comprises 159 residues: Major allergen Mal d 1 (159 aa).

It belongs to the BetVI family.

The polypeptide is Major allergen Mal d 1 (Malus domestica (Apple)).